The following is a 232-amino-acid chain: C4-dicarboxylate TRAP transporter small permease protein DctQ (232 aa).

4 helical membrane passes run 30–50, 58–78, 103–123, and 167–187; these read EFLIAFFMGAMTLLTFANVIM, ILWALEGTVFMFAWMVLVGAS, LYALVAVACCLAFSILLLIGS, and FIPYAALPIGMALLTFRFLQI.

Belongs to the TRAP transporter small permease family. As to quaternary structure, the complex comprises the extracytoplasmic solute receptor protein DctP, and the two transmembrane proteins DctQ and DctM.

Its subcellular location is the cell inner membrane. In terms of biological role, part of the tripartite ATP-independent periplasmic (TRAP) transport system DctPQM involved in C4-dicarboxylates uptake. In Vibrio cholerae serotype O1 (strain ATCC 39315 / El Tor Inaba N16961), this protein is C4-dicarboxylate TRAP transporter small permease protein DctQ.